Consider the following 318-residue polypeptide: MKASQERSEARRTAHSVKEKKYMVMASPRKRPRDLEAEKAALWLEPSARLCLLNPPEMVTILLHHYAAEVSTSRQYRGGDFKGEPAFRFSPHLDPTVNRFIHPVSVLENPLAVSHTLLLHHGGLAMCPRFVAFTENRSKFPAAQYELFTVIFNEARVPIPQRVTEWLATLSPEEKTTVRILNWSGTTFEDQLELTERVLRSWADFSEYQLPSRHLSEFVTLKDSLRGYTDSSGHQYYHAKMDSVDETGVVYRVNLTRASIPRRFTLIVCHGTVAVTAVPVELTEDTFYKWLADDGDDGDGDDDGDDDGDDDGGDDDDE.

Residues 1–22 show a composition bias toward basic and acidic residues; it reads MKASQERSEARRTAHSVKEKKY. 2 disordered regions span residues 1 to 29 and 293 to 318; these read MKAS…ASPR and DDGD…DDDE.

This is an uncharacterized protein from Ictalurid herpesvirus 1 (strain Auburn) (IcHV-1).